The primary structure comprises 101 residues: Small ribosomal subunit protein uS14 (101 aa).

Belongs to the universal ribosomal protein uS14 family. Part of the 30S ribosomal subunit. Contacts proteins S3 and S10.

In terms of biological role, binds 16S rRNA, required for the assembly of 30S particles and may also be responsible for determining the conformation of the 16S rRNA at the A site. This is Small ribosomal subunit protein uS14 from Nitrosospira multiformis (strain ATCC 25196 / NCIMB 11849 / C 71).